A 576-amino-acid polypeptide reads, in one-letter code: Sodium/hydrogen exchanger 8 (576 aa).

Transmembrane regions (helical) follow at residues 55 to 75 (MTIF…HLLI), 79 to 99 (LHFL…GAVI), 118 to 138 (PNMF…YSLH), 151 to 171 (LFAV…IYFL), 186 to 206 (FAFG…IFNA), 256 to 276 (LGYF…TGLI), 306 to 326 (GLAE…GIVM), 349 to 369 (VAFL…FSFP), 374 to 394 (ISFV…NIFP), 412 to 432 (MFIM…SLHL), and 446 to 466 (TTIV…MPLI). Thr-505 is modified (phosphothreonine). Phosphoserine is present on residues Ser-566 and Ser-568.

It belongs to the monovalent cation:proton antiporter 1 (CPA1) transporter (TC 2.A.36) family. In terms of tissue distribution, predominantly expressed in the liver, skeletal muscle, kidney, and testis. Expressed in both renal cortex and medulla. Detected throughout the entire gastrointestinal tract, with high expression detected in stomach, duodenum and ascending colon. In gastric epithelium; expressed in the glands within the fundus and pylorus regions.

Its subcellular location is the golgi apparatus membrane. The protein localises to the golgi apparatus. It is found in the trans-Golgi network membrane. The protein resides in the endosome. It localises to the multivesicular body membrane. Its subcellular location is the apical cell membrane. The protein localises to the cytoplasmic vesicle. It is found in the secretory vesicle. The protein resides in the acrosome. The enzyme catalyses Na(+)(in) + H(+)(out) = Na(+)(out) + H(+)(in). Na(+)/H(+) antiporter. Mediates the electoneutral exchange of intracellular H(+) ions for extracellular Na(+) in 1:1 stoichiometry. Acts as an Na(+)/H(+) exchanger in the trans-Golgi. Contributes to the regulation of pH regulation of Golgi apparatus, and consequently, in protein trafficking and endosomal morphology. Plays a crucial role in germ cells in acrosome biogenesis and sperm development, probably by playing a role in the fusion of the Golgi-derived vesicles that form the acrosomal cap. Can also be active at the cell surface of specialized cells. In the small intestine, plays a major physiological role in transepithelial absorption of Na(+). Regulates intracellular pH homeostasis of intestinal epithelial cells. Acts as an important regulator of mucosal integrity in the intestine and in the stomach, could mediate the pH fluctuation necessary for mucin exocytosis or assist membrane trafficking of other proteins. Plays a role in photoreceptor survival and in the maintenance of intracellular pH homeostasis in retinal pigment epithelium (RPE cells). The polypeptide is Sodium/hydrogen exchanger 8 (Slc9a8) (Mus musculus (Mouse)).